We begin with the raw amino-acid sequence, 451 residues long: Phosphoglucosamine mutase (451 aa).

Serine 101 (phosphoserine intermediate) is an active-site residue. Residues serine 101, aspartate 243, aspartate 245, and aspartate 247 each coordinate Mg(2+). Serine 101 carries the phosphoserine modification.

Belongs to the phosphohexose mutase family. It depends on Mg(2+) as a cofactor. Activated by phosphorylation.

It catalyses the reaction alpha-D-glucosamine 1-phosphate = D-glucosamine 6-phosphate. Functionally, catalyzes the conversion of glucosamine-6-phosphate to glucosamine-1-phosphate. The sequence is that of Phosphoglucosamine mutase from Geobacter metallireducens (strain ATCC 53774 / DSM 7210 / GS-15).